Reading from the N-terminus, the 257-residue chain is tRNA dimethylallyltransferase (257 aa).

Position 15 to 22 (Gly15 to Ser22) interacts with ATP. Thr17–Ser22 contributes to the substrate binding site.

The protein belongs to the IPP transferase family. In terms of assembly, monomer. Requires Mg(2+) as cofactor.

It catalyses the reaction adenosine(37) in tRNA + dimethylallyl diphosphate = N(6)-dimethylallyladenosine(37) in tRNA + diphosphate. Its function is as follows. Catalyzes the transfer of a dimethylallyl group onto the adenine at position 37 in tRNAs that read codons beginning with uridine, leading to the formation of N6-(dimethylallyl)adenosine (i(6)A). In Oenococcus oeni (strain ATCC BAA-331 / PSU-1), this protein is tRNA dimethylallyltransferase.